A 313-amino-acid chain; its full sequence is 4-diphosphocytidyl-2-C-methyl-D-erythritol kinase (313 aa).

Residue K27 is part of the active site. 110–120 provides a ligand contact to ATP; that stretch reads PIGGGVGGGSS. D152 is a catalytic residue.

It belongs to the GHMP kinase family. IspE subfamily.

It catalyses the reaction 4-CDP-2-C-methyl-D-erythritol + ATP = 4-CDP-2-C-methyl-D-erythritol 2-phosphate + ADP + H(+). The protein operates within isoprenoid biosynthesis; isopentenyl diphosphate biosynthesis via DXP pathway; isopentenyl diphosphate from 1-deoxy-D-xylulose 5-phosphate: step 3/6. Its function is as follows. Catalyzes the phosphorylation of the position 2 hydroxy group of 4-diphosphocytidyl-2C-methyl-D-erythritol. The chain is 4-diphosphocytidyl-2-C-methyl-D-erythritol kinase from Histophilus somni (strain 129Pt) (Haemophilus somnus).